We begin with the raw amino-acid sequence, 373 residues long: 4-hydroxy-3-methylbut-2-en-1-yl diphosphate synthase (flavodoxin) (373 aa).

[4Fe-4S] cluster contacts are provided by cysteine 270, cysteine 273, cysteine 305, and glutamate 312.

This sequence belongs to the IspG family. It depends on [4Fe-4S] cluster as a cofactor.

It carries out the reaction (2E)-4-hydroxy-3-methylbut-2-enyl diphosphate + oxidized [flavodoxin] + H2O + 2 H(+) = 2-C-methyl-D-erythritol 2,4-cyclic diphosphate + reduced [flavodoxin]. The protein operates within isoprenoid biosynthesis; isopentenyl diphosphate biosynthesis via DXP pathway; isopentenyl diphosphate from 1-deoxy-D-xylulose 5-phosphate: step 5/6. Converts 2C-methyl-D-erythritol 2,4-cyclodiphosphate (ME-2,4cPP) into 1-hydroxy-2-methyl-2-(E)-butenyl 4-diphosphate. The protein is 4-hydroxy-3-methylbut-2-en-1-yl diphosphate synthase (flavodoxin) of Vibrio atlanticus (strain LGP32) (Vibrio splendidus (strain Mel32)).